The primary structure comprises 315 residues: Homoserine kinase (315 aa).

91 to 101 (PIGSGLGSSAS) is a binding site for ATP.

This sequence belongs to the GHMP kinase family. Homoserine kinase subfamily.

The protein localises to the cytoplasm. It carries out the reaction L-homoserine + ATP = O-phospho-L-homoserine + ADP + H(+). The protein operates within amino-acid biosynthesis; L-threonine biosynthesis; L-threonine from L-aspartate: step 4/5. In terms of biological role, catalyzes the ATP-dependent phosphorylation of L-homoserine to L-homoserine phosphate. The polypeptide is Homoserine kinase (Buchnera aphidicola subsp. Cinara cedri (strain Cc)).